The following is a 697-amino-acid chain: Elongation factor G 2 (697 aa).

The region spanning 5-280 (SKYRNIGIFA…AVVDYLPAPD (276 aa)) is the tr-type G domain. GTP-binding positions include 14 to 21 (AHVDAGKT), 78 to 82 (DTPGH), and 132 to 135 (NKLD).

This sequence belongs to the TRAFAC class translation factor GTPase superfamily. Classic translation factor GTPase family. EF-G/EF-2 subfamily.

The protein localises to the cytoplasm. Catalyzes the GTP-dependent ribosomal translocation step during translation elongation. During this step, the ribosome changes from the pre-translocational (PRE) to the post-translocational (POST) state as the newly formed A-site-bound peptidyl-tRNA and P-site-bound deacylated tRNA move to the P and E sites, respectively. Catalyzes the coordinated movement of the two tRNA molecules, the mRNA and conformational changes in the ribosome. The protein is Elongation factor G 2 (fusB) of Shewanella oneidensis (strain ATCC 700550 / JCM 31522 / CIP 106686 / LMG 19005 / NCIMB 14063 / MR-1).